The following is a 239-amino-acid chain: SVPPPVYGCHTPTDSCTGSQALLLRTPYNSDNLYQMTSQLECMTWNQMNLGATLKGHTTGYENDNHTTPILCGAQYRIHTHGVFRGIQDVRRVPGVAPTIVRSATETNEKRPFMCAYPGCNKRYFKLSHLQMHSRKHTGEKPYQCDFKDCERRFSRSDQLKRHQRRHTGVKPFQCKTCQRKFSRSDHLKTHTRTHTGKTSEKPFSCRWPSCQKKFARSDELVRHHNMHQRNMTKLQLTL.

Positions 43–51 match the 9aaTAD motif; that stretch reads MTWNQMNLG. C2H2-type zinc fingers lie at residues 113-137, 143-167, and 173-195; these read FMCA…SRKH, YQCD…QRRH, and FQCK…TRTH. 2 important for interaction with target DNA regions span residues 157-171 and 183-191; these read SDQL…TGVK and SRSDHLKTH. Positions 198–200 match the KTS motif motif; it reads KTS. The C2H2-type 4 zinc-finger motif lies at 204–228; it reads FSCRWPSCQKKFARSDELVRHHNMH. Lysine 234 is covalently cross-linked (Glycyl lysine isopeptide (Lys-Gly) (interchain with G-Cter in SUMO2)).

Belongs to the EGR C2H2-type zinc-finger protein family. As to quaternary structure, interacts with ZNF224 via the zinc-finger region. Interacts with WTAP, AMER1 and SRY. Homodimer. Interacts with WTIP. Interacts with actively translating polysomes. Detected in nuclear ribonucleoprotein (mRNP) particles. Interacts with U2AF2. Interacts with HNRNPU via the zinc-finger region. Interacts with CITED2.

The protein resides in the nucleus speckle. The protein localises to the nucleus. It is found in the nucleoplasm. It localises to the cytoplasm. Functionally, transcription factor that plays an important role in cellular development and cell survival. Recognizes and binds to the DNA sequence 5'-GCG(T/G)GGGCG-3'. Regulates the expression of numerous target genes, including EPO. Plays an essential role for development of the urogenital system. It has a tumor suppressor as well as an oncogenic role in tumor formation. Function may be isoform-specific: isoforms lacking the KTS motif may act as transcription factors. Isoforms containing the KTS motif may bind mRNA and play a role in mRNA metabolism or splicing. This Sminthopsis macroura (Stripe-faced dunnart) protein is Wilms tumor protein homolog (WT1).